A 398-amino-acid chain; its full sequence is Alpha-2,8-sialyltransferase 8F (398 aa).

The Cytoplasmic segment spans residues 1-3; the sequence is MRS. Residues 4–24 form a helical; Signal-anchor for type II membrane protein membrane-spanning segment; the sequence is GGTLFALIGSLMLLLLLRMLW. Over 25 to 398 the chain is Lumenal; sequence CPADAPARSR…KLQFSKCETA (374 aa). Asn-66, Asn-93, Asn-151, and Asn-196 each carry an N-linked (GlcNAc...) asparagine glycan. Disulfide bonds link Cys-186–Cys-335 and Cys-200–Cys-395. Substrate contacts are provided by residues Asn-214, 236–238, and 322–324; these read NPS and STG. His-370 serves as the catalytic Proton donor/acceptor.

This sequence belongs to the glycosyltransferase 29 family. In terms of tissue distribution, highly expressed in kidney and expressed and all tissues tested.

The protein resides in the golgi apparatus membrane. The catalysed reaction is a ganglioside GM3 + CMP-N-acetyl-beta-neuraminate = a ganglioside GD3 + CMP + H(+). The enzyme catalyses a ganglioside GM3 (d18:1(4E)) + CMP-N-acetyl-beta-neuraminate = a ganglioside GD3 (d18:1(4E)) + CMP + H(+). It catalyses the reaction a ganglioside GD1a (d18:1(4E)) + CMP-N-acetyl-beta-neuraminate = a ganglioside GT1a (d18:1(4E)) + CMP + H(+). It carries out the reaction a ganglioside GD1a + CMP-N-acetyl-beta-neuraminate = a ganglioside GT1a + CMP + H(+). The catalysed reaction is a ganglioside GM1b (d18:1(4E)) + CMP-N-acetyl-beta-neuraminate = a ganglioside GD1c (d18:1(4E)) + CMP + H(+). The enzyme catalyses a ganglioside GM1b + CMP-N-acetyl-beta-neuraminate = a ganglioside GD1c + CMP + H(+). It catalyses the reaction a ganglioside GM4 (d18:1(4E)) + CMP-N-acetyl-beta-neuraminate = an N-acetyl-alpha-neuraminosyl-(2-&gt;8)-N-acetyl-alpha-neuraminosyl-(2-&gt;3)-beta-D-galactosyl-(1&lt;-&gt;1')-N-acylsphing-4-enine + CMP + H(+). It carries out the reaction N-acetyl-alpha-neuraminosyl-(2-&gt;3)-beta-D-galactosyl-(1&lt;-&gt;1')-ceramide + CMP-N-acetyl-beta-neuraminate = N-acetyl-alpha-neuraminosyl-(2-&gt;8)-N-acetyl-alpha-neuraminosyl-(2-&gt;3)-beta-D-galactosyl-(1&lt;-&gt;1')-ceramide + CMP + H(+). The catalysed reaction is a ganglioside GT1b (d18:1(4E)) + CMP-N-acetyl-beta-neuraminate = a ganglioside GQ1b (d18:1(4E)) + CMP + H(+). The enzyme catalyses a ganglioside GT1b + CMP-N-acetyl-beta-neuraminate = a ganglioside GQ1b + CMP + H(+). It functions in the pathway protein modification; protein glycosylation. Its function is as follows. Alpha-2,8-sialyltransferase that prefers O-glycans to N-glycans or glycolipids as acceptor substrates. The minimal acceptor substrate is the NeuAc-alpha-2,3(6)-Gal sequence at the non-reducing end of their carbohydrate groups. In Mus musculus (Mouse), this protein is Alpha-2,8-sialyltransferase 8F.